A 266-amino-acid chain; its full sequence is Non-structural maintenance of chromosomes element 1 homolog (266 aa).

An interaction with NSMCE3 region spans residues 1–102 (MQGSTRRMSV…SISKMATDFA (102 aa)). The RING-type; atypical zinc finger occupies 191–232 (CNICHSLLIQGQSCETCGIRMHLPCVAKYFQSNAEPRCPHCN). The tract at residues 245–266 (PEKERESGVSKSNKKSLRSRQH) is disordered. Residue S251 is modified to Phosphoserine. The span at 256–266 (SNKKSLRSRQH) shows a compositional bias: basic residues.

This sequence belongs to the NSE1 family. Component of the SMC5-SMC6 complex which consists at least of SMC5, SMC6, NSMCE2, NSMCE1, NSMCE4A or EID3 and NSMCE3. NSMCE1, NSMCE4A or EID3 and NSMCE3 probably form a subcomplex that bridges the head domains of the SMC5-SMC6 heterodimer. Interacts with NSMCE3. Post-translationally, ubiquitinated.

The protein localises to the nucleus. It localises to the chromosome. It is found in the telomere. The enzyme catalyses S-ubiquitinyl-[E2 ubiquitin-conjugating enzyme]-L-cysteine + [acceptor protein]-L-lysine = [E2 ubiquitin-conjugating enzyme]-L-cysteine + N(6)-ubiquitinyl-[acceptor protein]-L-lysine.. Its function is as follows. RING-type zinc finger-containing E3 ubiquitin ligase that assembles with melanoma antigen protein (MAGE) to catalyze the direct transfer of ubiquitin from E2 ubiquitin-conjugating enzyme to a specific substrate. Within MAGE-RING ubiquitin ligase complex, MAGE stimulates and specifies ubiquitin ligase activity likely through recruitment and/or stabilization of the E2 ubiquitin-conjugating enzyme at the E3:substrate complex. Involved in maintenance of genome integrity, DNA damage response and DNA repair. NSMCE3/MAGEG1 and NSMCE1 ubiquitin ligase are components of SMC5-SMC6 complex and may positively regulate homologous recombination-mediated DNA repair. This Pongo abelii (Sumatran orangutan) protein is Non-structural maintenance of chromosomes element 1 homolog (NSMCE1).